The sequence spans 481 residues: Aspartyl/glutamyl-tRNA(Asn/Gln) amidotransferase subunit B (481 aa).

The protein belongs to the GatB/GatE family. GatB subfamily. In terms of assembly, heterotrimer of A, B and C subunits.

The enzyme catalyses L-glutamyl-tRNA(Gln) + L-glutamine + ATP + H2O = L-glutaminyl-tRNA(Gln) + L-glutamate + ADP + phosphate + H(+). It catalyses the reaction L-aspartyl-tRNA(Asn) + L-glutamine + ATP + H2O = L-asparaginyl-tRNA(Asn) + L-glutamate + ADP + phosphate + 2 H(+). Functionally, allows the formation of correctly charged Asn-tRNA(Asn) or Gln-tRNA(Gln) through the transamidation of misacylated Asp-tRNA(Asn) or Glu-tRNA(Gln) in organisms which lack either or both of asparaginyl-tRNA or glutaminyl-tRNA synthetases. The reaction takes place in the presence of glutamine and ATP through an activated phospho-Asp-tRNA(Asn) or phospho-Glu-tRNA(Gln). This is Aspartyl/glutamyl-tRNA(Asn/Gln) amidotransferase subunit B from Marinomonas sp. (strain MWYL1).